We begin with the raw amino-acid sequence, 399 residues long: MKVLVLNCGSSSVKYQVFDMKDEKVLAKGLAERIGLDGSRIVYQRGVESKKVFEIPLPTHKKAIEEIFRLLVDKNDGILSSLNEIDAVGHRVVHGGDKFIESVLVNDEVYNTFKGILDLAPLHNPYNLQGVDACLELMPGVPQVLVFDTSFHQTMPEEAYIYALPYEWYEKYKIRRYGFHGTSHYYVSRRVAELIGRPVEELKIISCHLGNGASITAIKNGKSIDTSMGYTPLEGLVMGTRCGDIDPAIPILLMEKENLSPKQIDEILNKKSGILGISGVSSDFRDVGEAAEKGNKRAELALKVFAYRVKKYIGAYHAILGGLDVLVFTAGVGERGPLERSLICSGLEHLGIKLDPEKNKVKGEELKISTPDSKVEVWVIPTNEELMIARETVRVVGKK.

Position 7 (asparagine 7) interacts with Mg(2+). Lysine 14 contributes to the ATP binding site. Residue arginine 91 coordinates substrate. Aspartate 148 acts as the Proton donor/acceptor in catalysis. ATP-binding positions include 208 to 212 and 283 to 285; these read HLGNG and DFR. Glutamate 384 is a Mg(2+) binding site.

The protein belongs to the acetokinase family. Homodimer. Mg(2+) is required as a cofactor. It depends on Mn(2+) as a cofactor.

It is found in the cytoplasm. It catalyses the reaction acetate + ATP = acetyl phosphate + ADP. It functions in the pathway metabolic intermediate biosynthesis; acetyl-CoA biosynthesis; acetyl-CoA from acetate: step 1/2. Its function is as follows. Catalyzes the formation of acetyl phosphate from acetate and ATP. Can also catalyze the reverse reaction. This chain is Acetate kinase, found in Dictyoglomus thermophilum (strain ATCC 35947 / DSM 3960 / H-6-12).